A 278-amino-acid chain; its full sequence is Envelope glycoprotein L (278 aa).

Residues 1-30 form the signal peptide; it reads MCRRPDCGFSFSPGPVVLLWCCLLLPIVSS. The region spanning 43–256 is the gL betaherpesvirus-type domain; that stretch reads VPAECPELTR…DKYYAGLPPE (214 aa). Cys-154 and Cys-159 are disulfide-bonded.

Belongs to the herpesviridae glycoprotein L (gL) family. Betaherpesvirinae gL subfamily. Interacts with glycoprotein H (gH); this interaction is necessary for the correct processing and cell surface expression of gH. Forms the envelope pentamer complex (PC) composed of gH, gL, UL128, UL130, and UL131A. The pentamer interacts with host NRP2. Forms the envelope trimer complex composed of gH, gL, and gO. The trimer interacts with host PDGFRA. The trimer also interacts with host EPHA2.

The protein resides in the virion membrane. It localises to the host cell membrane. It is found in the host Golgi apparatus. The protein localises to the host trans-Golgi network. The heterodimer glycoprotein H-glycoprotein L is required for the fusion of viral and plasma membranes leading to virus entry into the host cell. Acts as a functional inhibitor of gH and maintains gH in an inhibited form. Upon binding to host integrins, gL dissociates from gH leading to activation of the viral fusion glycoproteins gB and gH. In human cytomegalovirus, forms two distincts complexes to mediate viral entry, a trimer and a pentamer at the surface of the virion envelope. The gH-gL-gO trimer is required for infection in fibroblasts by interacting with host PDGFRA, and in glioblastoma cells by interacting with host EPHA2. The gH-gL-UL128-UL130-UL131A pentamer is essential for viral entry in epithelial, endothelial and myeloid cells via interaction with host NRP2. This Human cytomegalovirus (strain 5040) (HHV-5) protein is Envelope glycoprotein L.